A 62-amino-acid polypeptide reads, in one-letter code: Large ribosomal subunit protein uL30 (62 aa).

The protein belongs to the universal ribosomal protein uL30 family. In terms of assembly, part of the 50S ribosomal subunit.

This Kosmotoga olearia (strain ATCC BAA-1733 / DSM 21960 / TBF 19.5.1) protein is Large ribosomal subunit protein uL30.